We begin with the raw amino-acid sequence, 257 residues long: Leucine-rich repeat-containing protein 3 (257 aa).

Positions 1–32 are cleaved as a signal peptide; the sequence is MGTVRPPRPSLLLVSTRESCLFLLFCLHLGAA. The LRRNT domain maps to 33 to 64; sequence CPQPCRCPDHAGAVAVFCSLRGLQEVPEDIPA. LRR repeat units lie at residues 65–86, 89–110, 114–135, and 136–157; these read NTVLLKLDANKISHLPDGAFQH, RLRELDLSHNAIEAIGSATFAG, GLRLLDLSYNRIQRIPKDALGK, and LSAKIRLSHNPLHCECALQEAL. Residues 205–225 traverse the membrane as a helical segment; the sequence is VAMLVTMFGWFAMVIAYVVYY.

Belongs to the LRRC3 family. Widely expressed; detected in testis, lung, small intestine, breast, brain, heart, bone marrow, placenta, colon, fetal brain, liver, fetal liver, thymus, salivary gland, spinal cord, spleen, trachea and adrenal gland.

It is found in the membrane. In Homo sapiens (Human), this protein is Leucine-rich repeat-containing protein 3 (LRRC3).